We begin with the raw amino-acid sequence, 685 residues long: MSKANRQILVTCALPYANGPIHLGHMLEHIQADIWVRFQRMRGHEIYFVCADDAHGTPIMLKADQMGIAPEQLIADVQKSHYADFCGFNISFDNYHSTHSEENREFSEMIYNRLKENGFIKTRAISQLFDPEKSMFLPDRFVKGTCPKCKAEDQYGDNCEVCSATYSPTELIAPRSVVSGATPIIKESEHFFFDLPSFEAMLKQWNRSGALQSEVANKMQEWFDAGLQQWDISRDAPYFGFKIPGTENKYFYVWLDAPIGYMASFKNLCNRQNIDFDRFWNKDSQAELYHFIGKDIMYFHSLFWPAMLEGADLRKPSNIFVHGYVTVNGEKMSKSRGTFIQAATYLKHLDPECLRYYYAAKLSNRIDDLDLNLEDFVQRVNTDLVNKLVNLASRNAGFIQKRFAGKLADKLDDEALFNEFIAQSAQIAAYYENREFGKAVREIMALTDKANKYVDEKAPWVIAKEQGRETELQRVCSMGIQLFRVLMGYLKPVLPKLAERSEAFLQAELTWDNLTQPLLDHEIAPFKALFSRVDSKQIEAMIEASKAENAAVNSSPKAEKTAKKTTALESEFEPLEAEISIDDFAKMDLRVAKVISCEAVPESKKLLKFQLDLGFETRQVLSGIKAAYGNPEELMGRFVIMVANLAPRKMKFGMSEGMILSAGSGGEDLFLLDVDAGVKAGSRVK.

The short motif at 15–25 (PYANGPIHLGH) is the 'HIGH' region element. 4 residues coordinate Zn(2+): C146, C149, C159, and C162. Positions 331-335 (KMSKS) match the 'KMSKS' region motif. K334 is a binding site for ATP. In terms of domain architecture, tRNA-binding spans 583-685 (DFAKMDLRVA…AGVKAGSRVK (103 aa)).

The protein belongs to the class-I aminoacyl-tRNA synthetase family. MetG type 1 subfamily. Homodimer. It depends on Zn(2+) as a cofactor.

The protein localises to the cytoplasm. It carries out the reaction tRNA(Met) + L-methionine + ATP = L-methionyl-tRNA(Met) + AMP + diphosphate. Functionally, is required not only for elongation of protein synthesis but also for the initiation of all mRNA translation through initiator tRNA(fMet) aminoacylation. The sequence is that of Methionine--tRNA ligase from Actinobacillus succinogenes (strain ATCC 55618 / DSM 22257 / CCUG 43843 / 130Z).